A 548-amino-acid polypeptide reads, in one-letter code: Undecaprenyl phosphate-alpha-4-amino-4-deoxy-L-arabinose arabinosyl transferase 1 (548 aa).

The next 12 helical transmembrane spans lie at 11 to 31 (WLLFFLFILLTYFIPLETRLL), 89 to 109 (IVVVTSTLLTGWLIYKAAMVV), 114 to 134 (ALAFNAMTVFLSSFLVLAIGT), 137 to 157 (ILDPIVTLFVTAAMYSFLVAL), 180 to 200 (FLTKGFIAVVLPALVFLVMAI), 214 to 234 (IALLALAITAGPWVITVALQA), 263 to 283 (FYIPIVILGVLPWLGFLFGAL), 292 to 312 (GTLYFLLWFTLFFAFFSASKG), 314 to 334 (LLTYMLPCFVPLSILIAHYIE), 347 to 367 (VNASINIAFGLMGISAVIYSL), 382 to 402 (KIVLAISGFLFWSVIGAGALF), and 405 to 425 (TQFLTMFCSIGLSLVIGYAIP).

It belongs to the glycosyltransferase 83 family.

Its subcellular location is the cell inner membrane. The catalysed reaction is 4-amino-4-deoxy-alpha-L-arabinopyranosyl di-trans,octa-cis-undecaprenyl phosphate + lipid IVA = lipid IIA + di-trans,octa-cis-undecaprenyl phosphate.. It participates in lipopolysaccharide metabolism; 4-amino-4-deoxy-beta-L-arabinose-lipid A biosynthesis. Its function is as follows. Catalyzes the transfer of the L-Ara4N moiety of the glycolipid undecaprenyl phosphate-alpha-L-Ara4N to lipid A. The modified arabinose is attached to lipid A and is required for resistance to polymyxin and cationic antimicrobial peptides. This chain is Undecaprenyl phosphate-alpha-4-amino-4-deoxy-L-arabinose arabinosyl transferase 1, found in Proteus mirabilis (strain HI4320).